Reading from the N-terminus, the 314-residue chain is Homoserine O-acetyltransferase (314 aa).

The Acyl-thioester intermediate role is filled by Cys-142. Positions 163 and 192 each coordinate substrate. Catalysis depends on His-235, which acts as the Proton acceptor. The active site involves Glu-237. Arg-249 contributes to the substrate binding site.

The protein belongs to the MetA family.

The protein localises to the cytoplasm. It catalyses the reaction L-homoserine + acetyl-CoA = O-acetyl-L-homoserine + CoA. Its pathway is amino-acid biosynthesis; L-methionine biosynthesis via de novo pathway; O-acetyl-L-homoserine from L-homoserine: step 1/1. Functionally, transfers an acetyl group from acetyl-CoA to L-homoserine, forming acetyl-L-homoserine. The sequence is that of Homoserine O-acetyltransferase from Streptococcus pneumoniae (strain JJA).